Consider the following 497-residue polypeptide: MAKYVMALDQGTTSSRAIIFDHSGKMIASLNKEFRQIYPKPGWVEHDPMEIWESQIEVAKGVIEKAGIKPEDIAAIGITNQRETTVVWDKNTGKPIYNAIVWQCRRTAPICDDLKNKGFDKKIREKTGLVVDAYFSGTKVKWILDNVEGAREKAERGELLFGNIDTWLIWNLTRGKVHVTDYSNASRTMLFNIHELKWDKEILEELNVPENMLPEVKPSSHVYGYTDKSIFGVEIPIAGDAGDQQAALFGQACFKPGMAKNTYGTGCFMLMNTGEKAVPSKTGLLTTIAWGIDGKVEYALEGSIFITGAAIQWLRDELRIIDNAPQSEEYALKVEDTNGVYVVPAFVGLGAPYWDMYARGVIVGLTRGAKREHIIRATLESIAYQTRDVLEAMQEDSGIKLQALKVDGGASANNFLMQFQADILGVPVDRPQVIETTALGAAYLAGLAVGFWNSREEIEKNWNIDRRFEPAMEEEKREKLYRGWKKAVERAMKWAEE.

Residue T12 coordinates ADP. 3 residues coordinate ATP: T12, T13, and S14. T12 contacts sn-glycerol 3-phosphate. R16 contacts ADP. Sn-glycerol 3-phosphate is bound by residues R82, E83, Y134, and D243. Residues R82, E83, Y134, D243, and Q244 each contribute to the glycerol site. 2 residues coordinate ADP: T265 and G308. Residues T265, G308, Q312, and G409 each coordinate ATP. Residues G409 and N413 each contribute to the ADP site.

This sequence belongs to the FGGY kinase family. Homotetramer and homodimer (in equilibrium).

The catalysed reaction is glycerol + ATP = sn-glycerol 3-phosphate + ADP + H(+). Its pathway is polyol metabolism; glycerol degradation via glycerol kinase pathway; sn-glycerol 3-phosphate from glycerol: step 1/1. With respect to regulation, activated by phosphorylation and inhibited by fructose 1,6-bisphosphate (FBP). Functionally, key enzyme in the regulation of glycerol uptake and metabolism. Catalyzes the phosphorylation of glycerol to yield sn-glycerol 3-phosphate. This is Glycerol kinase from Caldanaerobacter subterraneus subsp. tengcongensis (strain DSM 15242 / JCM 11007 / NBRC 100824 / MB4) (Thermoanaerobacter tengcongensis).